The chain runs to 193 residues: Achaete-scute homolog 2 (193 aa).

Disordered regions lie at residues 1–27, 37–56, and 118–177; these read MDGG…RRPA, RRRP…ARRN, and GGLR…GALS. Residues 50–102 form the bHLH domain; sequence AAVARRNERERNRVKLVNLGFQALRQHVPHGGASKKLSKVETLRSAVEYIRAL. Positions 140 to 150 are enriched in low complexity; sequence AASPSRASSSP.

Efficient DNA binding requires dimerization with another basic helix-loop-helix (bHLH) protein. Forms heterodimers with bHLH transcription factor TCF3. May not heterodimerise with bHLH protein HAND1. In terms of tissue distribution, expressed in the placenta at a stage between the first and second trimesters and when it matures, at about 32-36 weeks. Expressed in the extravillous trophoblasts, the intermediate trophoblasts, and at lower levels in the cytotrophoblasts and stroma of chorionic villi of the developing placenta. Expressed in follicular T-helper (Tfh) cells.

It localises to the nucleus. Functionally, transcription factor. Binds to E-box motifs 5'-CANNTG-3' in the regulatory elements of target genes, probably as a heterodimer with another basic helix-loop-helix (bHLH) protein such as the transcription factor TCF3. May bind both open and closed chromatin, acting as a pioneer transcription factor to allow other factors to bind and activate lineage-specific genes. Required during post-implantation development for the generation of some differentiated trophoblast cell types. Transcriptional activity of ASCL2 may be antagonised in a subset of trophoblast cells by bHLH transcription factor HAND1, perhaps by competing for dimerization with other bHLH proteins. Involved in differentiation and function of follicular T-helper (Tfh) cells, thereby playing a role in germinal center responses; probably modulates expression of genes involved in Tfh cell function, such as BCL6. May also act as a suppressor of Th1-, Th2- and Th17-cell differentiation. Induces the formation of stem cells in intestinal crypts in vitro, synergistically activating transcription of target genes, such as SOX9, together with TCF4/beta-catenin. May form a bistable transcriptional switch, controlling expression of its own gene together with Wnt/R-spondin signaling, and thereby maintaining stem cell characteristics. Modulates expression of target genes, including perhaps down-regulating EGR1/Krox24 and chemokine CXCL10/Mob-1 and up-regulating CXCR4 and CDKN1C/p57kip2, in Schwann cells. May play a role in reducing proliferation of Schwann cells, perhaps acting via modulation of expression of CDKN1C. May be dispensable for blastocyst formation and later embryonic function. May be involved in the determination of neuronal precursors. This Homo sapiens (Human) protein is Achaete-scute homolog 2 (ASCL2).